The chain runs to 478 residues: Shikimate biosynthesis protein AroDE (478 aa).

The tract at residues Met-1 to Ala-208 is 3-dehydroquinate dehydratase. Residues Ser-21, Glu-29–Arg-31, and Ala-55–Lys-57 each bind 3-dehydroquinate. His-110 functions as the Proton donor/acceptor; for 3-dehydroquinate dehydratase activity in the catalytic mechanism. Lys-133 acts as the Schiff-base intermediate with substrate; for 3-dehydroquinate dehydratase activity in catalysis. 3-dehydroquinate contacts are provided by Arg-171 and Gln-196. A shikimate 5-dehydrogenase region spans residues Ser-209–Pro-478. Residue Ser-226–Gly-228 coordinates shikimate. The Proton acceptor; for shikimate dehydrogenase activity role is filled by Lys-277. Asn-298 and Asp-313 together coordinate shikimate. NADP(+)-binding positions include Gly-337 to Ala-341, Asn-360 to Thr-362, and Gly-435. Gln-442 lines the shikimate pocket.

It in the N-terminal section; belongs to the type-I 3-dehydroquinase family. The protein in the C-terminal section; belongs to the shikimate dehydrogenase family.

The enzyme catalyses 3-dehydroquinate = 3-dehydroshikimate + H2O. It carries out the reaction shikimate + NADP(+) = 3-dehydroshikimate + NADPH + H(+). It functions in the pathway metabolic intermediate biosynthesis; chorismate biosynthesis; chorismate from D-erythrose 4-phosphate and phosphoenolpyruvate: step 3/7. The protein operates within metabolic intermediate biosynthesis; chorismate biosynthesis; chorismate from D-erythrose 4-phosphate and phosphoenolpyruvate: step 4/7. In terms of biological role, bifunctional enzyme that catalyzes two sequential steps of the aromatic amino acids biosynthetic pathway. In the first reaction, the AroD domain catalyzes the cis-dehydration of 3-dehydroquinate (DHQ) and introduces the first double bond of the aromatic ring to yield 3-dehydroshikimate; in the second reaction, the AroE domain catalyzes the reversible NADPH linked reduction of 3-dehydroshikimate (DHSA) to yield shikimate (SA). This is Shikimate biosynthesis protein AroDE from Chlamydia trachomatis serovar D (strain ATCC VR-885 / DSM 19411 / UW-3/Cx).